Consider the following 100-residue polypeptide: Large ribosomal subunit protein uL23 (100 aa).

It belongs to the universal ribosomal protein uL23 family. Part of the 50S ribosomal subunit. Contacts protein L29, and trigger factor when it is bound to the ribosome.

One of the early assembly proteins it binds 23S rRNA. One of the proteins that surrounds the polypeptide exit tunnel on the outside of the ribosome. Forms the main docking site for trigger factor binding to the ribosome. The sequence is that of Large ribosomal subunit protein uL23 from Vibrio campbellii (strain ATCC BAA-1116).